Here is a 227-residue protein sequence, read N- to C-terminus: Cytochrome c oxidase subunit 2 (227 aa).

Over 1–14 (MAHPVQLGFQDAAS) the chain is Mitochondrial intermembrane. A helical transmembrane segment spans residues 15–45 (PIMEELLYFHDHTLMIMFLISSLVLYIISLM). The Mitochondrial matrix segment spans residues 46–59 (LTTKLTHTSTMDAQ). Residues 60–87 (EVETVWTILPAAILILIALPSLRILYMM) traverse the membrane as a helical segment. At 88–227 (DEITSPSLTL…HFEEWLLFTL (140 aa)) the chain is on the mitochondrial intermembrane side. 6 residues coordinate Cu cation: His-161, Cys-196, Glu-198, Cys-200, His-204, and Met-207. Glu-198 contacts Mg(2+).

It belongs to the cytochrome c oxidase subunit 2 family. Component of the cytochrome c oxidase (complex IV, CIV), a multisubunit enzyme composed of 14 subunits. The complex is composed of a catalytic core of 3 subunits MT-CO1, MT-CO2 and MT-CO3, encoded in the mitochondrial DNA, and 11 supernumerary subunits COX4I, COX5A, COX5B, COX6A, COX6B, COX6C, COX7A, COX7B, COX7C, COX8 and NDUFA4, which are encoded in the nuclear genome. The complex exists as a monomer or a dimer and forms supercomplexes (SCs) in the inner mitochondrial membrane with NADH-ubiquinone oxidoreductase (complex I, CI) and ubiquinol-cytochrome c oxidoreductase (cytochrome b-c1 complex, complex III, CIII), resulting in different assemblies (supercomplex SCI(1)III(2)IV(1) and megacomplex MCI(2)III(2)IV(2)). Found in a complex with TMEM177, COA6, COX18, COX20, SCO1 and SCO2. Interacts with TMEM177 in a COX20-dependent manner. Interacts with COX20. Interacts with COX16. Requires Cu cation as cofactor.

It is found in the mitochondrion inner membrane. It catalyses the reaction 4 Fe(II)-[cytochrome c] + O2 + 8 H(+)(in) = 4 Fe(III)-[cytochrome c] + 2 H2O + 4 H(+)(out). In terms of biological role, component of the cytochrome c oxidase, the last enzyme in the mitochondrial electron transport chain which drives oxidative phosphorylation. The respiratory chain contains 3 multisubunit complexes succinate dehydrogenase (complex II, CII), ubiquinol-cytochrome c oxidoreductase (cytochrome b-c1 complex, complex III, CIII) and cytochrome c oxidase (complex IV, CIV), that cooperate to transfer electrons derived from NADH and succinate to molecular oxygen, creating an electrochemical gradient over the inner membrane that drives transmembrane transport and the ATP synthase. Cytochrome c oxidase is the component of the respiratory chain that catalyzes the reduction of oxygen to water. Electrons originating from reduced cytochrome c in the intermembrane space (IMS) are transferred via the dinuclear copper A center (CU(A)) of subunit 2 and heme A of subunit 1 to the active site in subunit 1, a binuclear center (BNC) formed by heme A3 and copper B (CU(B)). The BNC reduces molecular oxygen to 2 water molecules using 4 electrons from cytochrome c in the IMS and 4 protons from the mitochondrial matrix. The polypeptide is Cytochrome c oxidase subunit 2 (MT-CO2) (Varecia variegata (Black-and-white ruffed lemur)).